A 137-amino-acid chain; its full sequence is Small ribosomal subunit protein bS6 (137 aa).

A disordered region spans residues 96-137; that stretch reads ITEASPMAKAKDERDTRRSSEERAPRAEATEEVKESAENTAE. Over residues 104 to 137 the composition is skewed to basic and acidic residues; it reads KAKDERDTRRSSEERAPRAEATEEVKESAENTAE.

This sequence belongs to the bacterial ribosomal protein bS6 family.

Binds together with bS18 to 16S ribosomal RNA. This is Small ribosomal subunit protein bS6 from Shewanella piezotolerans (strain WP3 / JCM 13877).